A 489-amino-acid polypeptide reads, in one-letter code: Mitochondrial distribution and morphology protein 10 (489 aa).

This sequence belongs to the MDM10 family. As to quaternary structure, component of the ER-mitochondria encounter structure (ERMES) or MDM complex, composed of MMM1, MDM10, MDM12 and MDM34. Associates with the mitochondrial outer membrane sorting assembly machinery SAM(core) complex.

It localises to the mitochondrion outer membrane. Functionally, component of the ERMES/MDM complex, which serves as a molecular tether to connect the endoplasmic reticulum and mitochondria. Components of this complex are involved in the control of mitochondrial shape and protein biogenesis and may function in phospholipid exchange. MDM10 is involved in the late assembly steps of the general translocase of the mitochondrial outer membrane (TOM complex). Functions in the TOM40-specific route of the assembly of outer membrane beta-barrel proteins, including the association of TOM40 with the receptor TOM22 and small TOM proteins. Can associate with the SAM(core) complex as well as the MDM12-MMM1 complex, both involved in late steps of the major beta-barrel assembly pathway, that is responsible for biogenesis of all outer membrane beta-barrel proteins. May act as a switch that shuttles between both complexes and channels precursor proteins into the TOM40-specific pathway. Plays a role in mitochondrial morphology and in the inheritance of mitochondria. This chain is Mitochondrial distribution and morphology protein 10, found in Arthroderma otae (strain ATCC MYA-4605 / CBS 113480) (Microsporum canis).